Consider the following 49-residue polypeptide: Large ribosomal subunit protein bL33 (49 aa).

This sequence belongs to the bacterial ribosomal protein bL33 family.

In Clostridium perfringens (strain ATCC 13124 / DSM 756 / JCM 1290 / NCIMB 6125 / NCTC 8237 / Type A), this protein is Large ribosomal subunit protein bL33.